The following is a 132-amino-acid chain: Cliotide T2 (132 aa).

The N-terminal stretch at 1–28 is a signal peptide; that stretch reads MAYVRLTSLAVLFFLAASVMLNVKKTEG. The segment at residues 29–58 is a cross-link (cyclopeptide (Gly-Asn)); sequence GEFLKCGESCVQGECYTPGCSCDWPICKKN. 3 cysteine pairs are disulfide-bonded: C34–C48, C38–C50, and C43–C55. Positions 59-132 are cleaved as a propeptide — removed in mature form; the sequence is HIIATNAKTV…NLKMPMTIIN (74 aa).

This is a cyclic peptide. Expressed in flower, stem, shoot and pod but not in root, leaf, seed and nodule (at protein level).

Probably participates in a plant defense mechanism. Not active against Gram-negative bacteria E.coli ATCC 700926, K.pneumoniae ATTC 13883 and P.aeruginosa ATCC 39018 at concentration up to 100 uM. Has cytotoxic but no hemolytic activity. This is Cliotide T2 from Clitoria ternatea (Butterfly pea).